The following is a 434-amino-acid chain: Tol-Pal system protein TolB (434 aa).

Residues 1–28 form the signal peptide; the sequence is MMNTRVWCKIIGMLALLVWLVSSPSVFA.

Belongs to the TolB family. The Tol-Pal system is composed of five core proteins: the inner membrane proteins TolA, TolQ and TolR, the periplasmic protein TolB and the outer membrane protein Pal. They form a network linking the inner and outer membranes and the peptidoglycan layer.

Its subcellular location is the periplasm. Functionally, part of the Tol-Pal system, which plays a role in outer membrane invagination during cell division and is important for maintaining outer membrane integrity. This chain is Tol-Pal system protein TolB, found in Nitrosococcus oceani (strain ATCC 19707 / BCRC 17464 / JCM 30415 / NCIMB 11848 / C-107).